Here is a 232-residue protein sequence, read N- to C-terminus: Succinyl-CoA:3-ketoacid coenzyme A transferase subunit A (232 aa).

24 to 30 (GGFGLCG) contributes to the CoA binding site.

This sequence belongs to the 3-oxoacid CoA-transferase subunit A family. As to quaternary structure, heterodimer of a subunit A and a subunit B.

It catalyses the reaction a 3-oxo acid + succinyl-CoA = a 3-oxoacyl-CoA + succinate. The chain is Succinyl-CoA:3-ketoacid coenzyme A transferase subunit A (scoA) from Helicobacter pylori (strain ATCC 700392 / 26695) (Campylobacter pylori).